The sequence spans 121 residues: MSDPDILFRLAETIEARKQSDPHASYVAKLLHDGRDKILKKIAEESAEVLLASKDGDSTHVVRETADLWFHCLVLLAHHNLKLGDVLDELRRREGVSGIDEKAARKAGLADNGIGRMNQDK.

The protein belongs to the PRA-PH family.

Its subcellular location is the cytoplasm. The enzyme catalyses 1-(5-phospho-beta-D-ribosyl)-ATP + H2O = 1-(5-phospho-beta-D-ribosyl)-5'-AMP + diphosphate + H(+). It functions in the pathway amino-acid biosynthesis; L-histidine biosynthesis; L-histidine from 5-phospho-alpha-D-ribose 1-diphosphate: step 2/9. The sequence is that of Phosphoribosyl-ATP pyrophosphatase from Nitrosospira multiformis (strain ATCC 25196 / NCIMB 11849 / C 71).